Reading from the N-terminus, the 324-residue chain is Coproporphyrin III ferrochelatase (324 aa).

Positions 184 and 266 each coordinate Fe(2+).

The protein belongs to the ferrochelatase family.

The protein localises to the cytoplasm. The catalysed reaction is Fe-coproporphyrin III + 2 H(+) = coproporphyrin III + Fe(2+). It functions in the pathway porphyrin-containing compound metabolism; protoheme biosynthesis. Functionally, involved in coproporphyrin-dependent heme b biosynthesis. Catalyzes the insertion of ferrous iron into coproporphyrin III to form Fe-coproporphyrin III. The polypeptide is Coproporphyrin III ferrochelatase (Lactiplantibacillus plantarum (strain ATCC BAA-793 / NCIMB 8826 / WCFS1) (Lactobacillus plantarum)).